The sequence spans 185 residues: Photosystem I assembly protein Ycf4 (185 aa).

A run of 2 helical transmembrane segments spans residues glycine 20–alanine 40 and isoleucine 57–serine 77.

This sequence belongs to the Ycf4 family.

Its subcellular location is the plastid. The protein localises to the chloroplast thylakoid membrane. Its function is as follows. Seems to be required for the assembly of the photosystem I complex. The sequence is that of Photosystem I assembly protein Ycf4 from Sorghum bicolor (Sorghum).